The following is a 363-amino-acid chain: MLACNDDTSLYLLVKQVTKKEIYSNDLENGNVKRGASMQSLYLIGDPKCCRNNSSKQKSIIILCGPTASGKSYLGHELAKAYNGEIINIDSMQVYKEIPIITASPPKSYKTEILYHLYNFLSMTEDFSVIKYLKLATEKIKEITDRGKLPILIGGTGLYINSLVFGYNNIPDISEDLQEQVRNLHVKIGNIELWSKLEKFDPLAASKINQNDTQRLIRAYEVFMQTGKSIFSFQTLPKEQILSDFNFKIIFLNPERKFLYKTCDERLDKIFKEGAIDEIALIKKQFAPKDYTNLKAVGIKEILAYLNGNLTLDEALNAAQIRTRQYAKRQVTWFKNQIQDKITLEYANQEEFTQTLKNPFKII.

The tract at residues 1–55 (MLACNDDTSLYLLVKQVTKKEIYSNDLENGNVKRGASMQSLYLIGDPKCCRNNSS) is unknown insert. 65 to 72 (GPTASGKS) contributes to the ATP binding site. 67-72 (TASGKS) is a substrate binding site. Interaction with substrate tRNA stretches follow at residues 90–93 (DSMQ) and 214–218 (QRLIR).

The protein belongs to the IPP transferase family. As to quaternary structure, monomer. It depends on Mg(2+) as a cofactor.

The catalysed reaction is adenosine(37) in tRNA + dimethylallyl diphosphate = N(6)-dimethylallyladenosine(37) in tRNA + diphosphate. Catalyzes the transfer of a dimethylallyl group onto the adenine at position 37 in tRNAs that read codons beginning with uridine, leading to the formation of N6-(dimethylallyl)adenosine (i(6)A). The polypeptide is tRNA dimethylallyltransferase (Rickettsia conorii (strain ATCC VR-613 / Malish 7)).